Here is a 305-residue protein sequence, read N- to C-terminus: tRNA uridine(34) hydroxylase (305 aa).

The region spanning 125–219 (ADENTVVVDT…YLEEVPREDS (95 aa)) is the Rhodanese domain. Catalysis depends on Cys-179, which acts as the Cysteine persulfide intermediate.

This sequence belongs to the TrhO family.

It carries out the reaction uridine(34) in tRNA + AH2 + O2 = 5-hydroxyuridine(34) in tRNA + A + H2O. Catalyzes oxygen-dependent 5-hydroxyuridine (ho5U) modification at position 34 in tRNAs. In Brucella anthropi (strain ATCC 49188 / DSM 6882 / CCUG 24695 / JCM 21032 / LMG 3331 / NBRC 15819 / NCTC 12168 / Alc 37) (Ochrobactrum anthropi), this protein is tRNA uridine(34) hydroxylase.